The following is a 484-amino-acid chain: Tubulin-like protein TubZ (484 aa).

32 to 33 (QK) provides a ligand contact to GTP. A Mg(2+)-binding site is contributed by Asp64. GTP-binding positions include 140–142 (GVG), Asn213, Lys237, and Asn241. A required to bind TubR-DNA complex region spans residues 408–484 (RKQDEEKVDI…LKTSNPFKKR (77 aa)). The disordered stretch occupies residues 428–484 (TFNPYNKNQGFGGASRFSGGKNSAFKRQTSEATSTQNQQEEENIISTLKTSNPFKKR). Positions 452–484 (FKRQTSEATSTQNQQEEENIISTLKTSNPFKKR) are enriched in polar residues.

This sequence belongs to the FtsZ family. TubZ subfamily. Forms filaments; a 2-stranded filament forms with the non-hydrolyzable GTP-gamma-S which is probably a precursor to the 4-stranded filament that forms in the presence of GTP. The 4-stranded form binds GDP. In vivo polymerizes to form dynamic filaments that often extend from one cell pole to the other, moving in a unidirectional manner. Filaments polymerize at the plus end and depolymerize at the minus end, a process called treadmilling. Polymerization only occurs above a critical concentration, it does not require upstream tubR. The tubC DNA-TubR complex binds to TubZ. Requires Mg(2+) as cofactor.

It is found in the cytoplasm. It carries out the reaction GTP + H2O = GDP + phosphate + H(+). GTPase is inhibited by GTP-gamma-S, which also stabilizes filaments. Functionally, a tubulin-like, filament forming GTPase; the motor component of the type III plasmid partition system which ensures correct segregation of the pBtoxis plasmid. Filaments may seed from the centromere-like site (tubC) when bound by DNA-binding protein TubR; the tubC-TubR complex stabilizes the TubZ filament. Filaments grow at the plus end and depolymerize at the minus end, a process called treadmilling. TubR-tubC complexes track the depolymerizing minus end of the filament, probably pulling plasmid within the cell. Required for pBtoxis plasmid replication/partition. Binds the TubR-tubC complex; GTP is not required for binding to TubR-tubC. TubZ alone does not bind DNA. Has a high GTPase activity in the presence of Mg(2+); in the presence of GTP assembles into dynamic filaments which upon polymerization bind almost exclusively GDP. Filament formation is cooperative, requiring a critical concentration. Formation occurs very quickly and is followed by disassembly as GTP is consumed. The polypeptide is Tubulin-like protein TubZ (Bacillus thuringiensis subsp. israelensis).